A 201-amino-acid chain; its full sequence is Pyridoxine/pyridoxamine 5'-phosphate oxidase (201 aa).

Residues 49–54 (RMVLLK), 64–65 (YT), Lys71, and Gln93 contribute to the FMN site. Lys54 serves as a coordination point for substrate. Tyr111, Arg115, and Ser119 together coordinate substrate. Residues 128–129 (QS) and Trp172 contribute to the FMN site. 178–180 (RLH) provides a ligand contact to substrate. Residue Arg182 coordinates FMN.

This sequence belongs to the pyridoxamine 5'-phosphate oxidase family. As to quaternary structure, homodimer. The cofactor is FMN.

It carries out the reaction pyridoxamine 5'-phosphate + O2 + H2O = pyridoxal 5'-phosphate + H2O2 + NH4(+). The enzyme catalyses pyridoxine 5'-phosphate + O2 = pyridoxal 5'-phosphate + H2O2. The protein operates within cofactor metabolism; pyridoxal 5'-phosphate salvage; pyridoxal 5'-phosphate from pyridoxamine 5'-phosphate: step 1/1. Its pathway is cofactor metabolism; pyridoxal 5'-phosphate salvage; pyridoxal 5'-phosphate from pyridoxine 5'-phosphate: step 1/1. Functionally, catalyzes the oxidation of either pyridoxine 5'-phosphate (PNP) or pyridoxamine 5'-phosphate (PMP) into pyridoxal 5'-phosphate (PLP). In Ruegeria sp. (strain TM1040) (Silicibacter sp.), this protein is Pyridoxine/pyridoxamine 5'-phosphate oxidase.